We begin with the raw amino-acid sequence, 123 residues long: Large ribosomal subunit protein uL14c (123 aa).

This sequence belongs to the universal ribosomal protein uL14 family. As to quaternary structure, part of the 50S ribosomal subunit. Interacts with IOJAP.

It is found in the plastid. The protein localises to the chloroplast. Its function is as follows. Binds to 23S rRNA. The chain is Large ribosomal subunit protein uL14c from Zea mays (Maize).